A 419-amino-acid polypeptide reads, in one-letter code: UDP-N-acetylglucosamine 1-carboxyvinyltransferase 2 (419 aa).

A phosphoenolpyruvate-binding site is contributed by 22 to 23; it reads KN. R92 is a UDP-N-acetyl-alpha-D-glucosamine binding site. Residue C116 is the Proton donor of the active site. The residue at position 116 (C116) is a 2-(S-cysteinyl)pyruvic acid O-phosphothioketal. Residues 121 to 125, D306, and V328 contribute to the UDP-N-acetyl-alpha-D-glucosamine site; that span reads RPIDL.

This sequence belongs to the EPSP synthase family. MurA subfamily.

The protein resides in the cytoplasm. The enzyme catalyses phosphoenolpyruvate + UDP-N-acetyl-alpha-D-glucosamine = UDP-N-acetyl-3-O-(1-carboxyvinyl)-alpha-D-glucosamine + phosphate. It participates in cell wall biogenesis; peptidoglycan biosynthesis. In terms of biological role, cell wall formation. Adds enolpyruvyl to UDP-N-acetylglucosamine. The chain is UDP-N-acetylglucosamine 1-carboxyvinyltransferase 2 from Carboxydothermus hydrogenoformans (strain ATCC BAA-161 / DSM 6008 / Z-2901).